The primary structure comprises 927 residues: Isoleucine--tRNA ligase (927 aa).

The 'HIGH' region signature appears at 57–67 (PFANGNIHMGH). Residue E553 coordinates L-isoleucyl-5'-AMP. The 'KMSKS' region motif lies at 594-598 (KMSKS). K597 is a binding site for ATP. Residues C886, C889, C906, and C909 each coordinate Zn(2+).

This sequence belongs to the class-I aminoacyl-tRNA synthetase family. IleS type 1 subfamily. As to quaternary structure, monomer. Requires Zn(2+) as cofactor.

Its subcellular location is the cytoplasm. It catalyses the reaction tRNA(Ile) + L-isoleucine + ATP = L-isoleucyl-tRNA(Ile) + AMP + diphosphate. Catalyzes the attachment of isoleucine to tRNA(Ile). As IleRS can inadvertently accommodate and process structurally similar amino acids such as valine, to avoid such errors it has two additional distinct tRNA(Ile)-dependent editing activities. One activity is designated as 'pretransfer' editing and involves the hydrolysis of activated Val-AMP. The other activity is designated 'posttransfer' editing and involves deacylation of mischarged Val-tRNA(Ile). The protein is Isoleucine--tRNA ligase of Lactobacillus acidophilus (strain ATCC 700396 / NCK56 / N2 / NCFM).